The primary structure comprises 307 residues: Ventral anterior homeobox 2 (307 aa).

3 disordered regions span residues 1–70, 155–175, and 197–254; these read MFDQ…DKLL, RTKQKKDQTKDTDKRSSSTSE, and PPPN…PSPR. A compositionally biased stretch (basic and acidic residues) spans 25-38; that stretch reads CRDRGRESKSRTEV. Residues 46 to 62 are compositionally biased toward low complexity; that stretch reads SSTDTPGTSASTPTSSS. A DNA-binding region (homeobox) is located at residues 103-162; it reads PKRTRTSFTAEQLYRLELEFQRCQYVVGRERTELARQLNLSETQVKVWFQNRRTKQKKDQ. The span at 159-170 shows a compositional bias: basic and acidic residues; the sequence is KKDQTKDTDKRS. Low complexity predominate over residues 202 to 249; that stretch reads LLAHPHPGNGSLLGSPSVSTSSGVSSSTTPPGAGSGTFGLSLSSLSGT.

It belongs to the EMX homeobox family. Expressed in the anterior neural keel and later in the preoptic area, optic stalk and ventral retina.

Its subcellular location is the nucleus. Its function is as follows. Transcription factor that may function in dorsoventral specification of the forebrain. Required for closure of the choroid fissure and together with vax1 is required for optic nerve differentiation and to limit retinal development to the optic cup. The sequence is that of Ventral anterior homeobox 2 (vax2) from Danio rerio (Zebrafish).